A 459-amino-acid polypeptide reads, in one-letter code: Chromosomal replication initiator protein DnaA (459 aa).

A domain I, interacts with DnaA modulators region spans residues 1–74; the sequence is MQKIETFWYF…DEMAQGHFNE (74 aa). The tract at residues 74–122 is domain II; sequence EKIHFKLELKDPAEIKTATIKAPEPKSKEDKKPPTDKAHGTTARKTNPS. A disordered region spans residues 91–123; it reads ATIKAPEPKSKEDKKPPTDKAHGTTARKTNPSR. Residues 96–112 are compositionally biased toward basic and acidic residues; it reads PEPKSKEDKKPPTDKAH. Positions 123 to 339 are domain III, AAA+ region; sequence RLNPAFTFDA…GALKRVLAYS (217 aa). The ATP site is built by glycine 167, glycine 169, lysine 170, and threonine 171. The domain IV, binds dsDNA stretch occupies residues 340–459; it reads RFTGHPISLD…YSTLIHILRG (120 aa).

It belongs to the DnaA family. In terms of assembly, oligomerizes as a right-handed, spiral filament on DNA at oriC.

The protein resides in the cytoplasm. In terms of biological role, plays an essential role in the initiation and regulation of chromosomal replication. ATP-DnaA binds to the origin of replication (oriC) to initiate formation of the DNA replication initiation complex once per cell cycle. Binds the DnaA box (a 9 base pair repeat at the origin) and separates the double-stranded (ds)DNA. Forms a right-handed helical filament on oriC DNA; dsDNA binds to the exterior of the filament while single-stranded (ss)DNA is stabiized in the filament's interior. The ATP-DnaA-oriC complex binds and stabilizes one strand of the AT-rich DNA unwinding element (DUE), permitting loading of DNA polymerase. After initiation quickly degrades to an ADP-DnaA complex that is not apt for DNA replication. Binds acidic phospholipids. The protein is Chromosomal replication initiator protein DnaA of Nitrosomonas eutropha (strain DSM 101675 / C91 / Nm57).